Reading from the N-terminus, the 477-residue chain is Zinc finger C3HC-type protein 1-like (477 aa).

A C3HC-type zinc finger spans residues 95 to 149 (CAKYGWCNIECDMLKCSSCNAYLCASLQPILDFSKYKQRCVELQEALRKAHEKFC). A disordered region spans residues 287 to 392 (SLSAPGTPVS…SSSSDTSPRS (106 aa)). A compositionally biased stretch (polar residues) spans 354 to 363 (SMGQGENTGL). Residues 370-379 (SPHRRAKRPR) are compositionally biased toward basic residues. Residues 382–392 (SSSSSDTSPRS) show a composition bias toward low complexity.

In terms of processing, phosphorylated. May also be weakly phosphorylated on Tyr residues.

The protein resides in the nucleus. Its subcellular location is the nucleus envelope. Its function is as follows. Required for proper positioning of a substantial amount of TPR at the nuclear basket (NB) through interaction with TPR. The polypeptide is Zinc finger C3HC-type protein 1-like (zc3hc1) (Xenopus laevis (African clawed frog)).